Here is a 995-residue protein sequence, read N- to C-terminus: DNA polymerase (995 aa).

This sequence belongs to the DNA polymerase type-B family.

It catalyses the reaction DNA(n) + a 2'-deoxyribonucleoside 5'-triphosphate = DNA(n+1) + diphosphate. This is DNA polymerase (RF1) from Kluyveromyces lactis (strain ATCC 8585 / CBS 2359 / DSM 70799 / NBRC 1267 / NRRL Y-1140 / WM37) (Yeast).